Here is a 406-residue protein sequence, read N- to C-terminus: Elongation factor Tu (406 aa).

The tr-type G domain maps to 10-215 (KPHVNVGTIG…AIDEYIPTPV (206 aa)). Residues 19–26 (GHVDHGKT) are G1. 19–26 (GHVDHGKT) serves as a coordination point for GTP. Threonine 26 is a binding site for Mg(2+). Positions 61–65 (GITIN) are G2. The G3 stretch occupies residues 82–85 (DCPG). GTP-binding positions include 82 to 86 (DCPGH) and 137 to 140 (NKVD). The tract at residues 137–140 (NKVD) is G4. The segment at 175-177 (SAL) is G5.

It belongs to the TRAFAC class translation factor GTPase superfamily. Classic translation factor GTPase family. EF-Tu/EF-1A subfamily. In terms of assembly, monomer.

The protein localises to the cytoplasm. The enzyme catalyses GTP + H2O = GDP + phosphate + H(+). GTP hydrolase that promotes the GTP-dependent binding of aminoacyl-tRNA to the A-site of ribosomes during protein biosynthesis. The polypeptide is Elongation factor Tu (Thermus thermophilus (strain ATCC BAA-163 / DSM 7039 / HB27)).